Reading from the N-terminus, the 390-residue chain is MTTYLFTSESVSEGHPDKIADQISDAVLDAILEQDPKARVACETYVKTGMVMVGGEITTSAWVDIEEITRQTVREIGYVNSEMGFDANSCAVLSAIGKQSPDINQGVDREDPLQQGAGDQGLMFGYATNETDVLMPAPITYAHRLVQRQAEVRKNGVLPWLRPDAKSQVTFQYNNDKIVGVDAVVLSTQHAENISQKDLQEAVMEEIIKPVLPAEWLNPTTKYFINPTGRFVIGGPMGDCGLTGRKIIVDTYGGMARHGGGAFSGKDPSKVDRSAAYAARYVAKNIVAAGLADRCEIQVSYAIGVAEPTSIMVETFGTEKVSTATLTLLVREFFDLRPHGLIQMLDLLHPIYRDTAAYGHFGRPQFPWEATDKAEALRDAAGLKLSAMNM.

His15 is an ATP binding site. Residue Asp17 coordinates Mg(2+). Glu43 lines the K(+) pocket. Residues Glu56 and Gln99 each contribute to the L-methionine site. The flexible loop stretch occupies residues 99-109 (QSPDINQGVDR). Residues 164-166 (DAK), 230-231 (RF), Asp239, 245-246 (RK), Ala262, and Lys266 each bind ATP. Asp239 lines the L-methionine pocket. L-methionine is bound at residue Lys270.

This sequence belongs to the AdoMet synthase family. In terms of assembly, homotetramer; dimer of dimers. Requires Mg(2+) as cofactor. The cofactor is K(+).

It localises to the cytoplasm. It catalyses the reaction L-methionine + ATP + H2O = S-adenosyl-L-methionine + phosphate + diphosphate. The protein operates within amino-acid biosynthesis; S-adenosyl-L-methionine biosynthesis; S-adenosyl-L-methionine from L-methionine: step 1/1. Catalyzes the formation of S-adenosylmethionine (AdoMet) from methionine and ATP. The overall synthetic reaction is composed of two sequential steps, AdoMet formation and the subsequent tripolyphosphate hydrolysis which occurs prior to release of AdoMet from the enzyme. This chain is S-adenosylmethionine synthase, found in Photorhabdus laumondii subsp. laumondii (strain DSM 15139 / CIP 105565 / TT01) (Photorhabdus luminescens subsp. laumondii).